Reading from the N-terminus, the 545-residue chain is MTTLTQSTTWKALQTHSSQLPHMRELFAQNPQRFEQMSVAACGLFLDYSKNRVNDETLKLLFSLAKEAKLSEKITAMFNGDVINNTEQRSVLHTALRSKATQTIIAEGANIVPEVQQTLAKMAKFVGSVQSGEWKGYTGKAITDIVSIGIGGSFLGPKIVSQALRPYWQEGLNCHFVANVDATSICEKLKNLNAETTLFVMSSKSFSTQETLTNTLSAKDWFLGQGASQQDVAKHFVAVTSNVTKATEFGMDANNIFPMWDWVGGRYSLWSAIGLPIALLVGMDNFTALLDGAHQMDQHFADTPIEQNMPVIMAMLSVLYGNFHGAQSHVILTYDHYLRGLPAYFQQLDMESNGKSVTLDGTDVDYSTGPVIWGGEGTNGQHAYHQLLHQGTALIPADFIMPLQSHNPLGEHHDQLASNCFGQTQALMQGRTYDEALAELSNSKLDEQQKPLIAKHKVMVGNKPSNTLLMDKLTPTTLGALIALYEHRTFVQGAIWQINSFDQWGVELGKQLGNDVLERIGADHDATDLDGSSNALVNLYRKGKL.

The active-site Proton donor is the Glu-351. Residues His-382 and Lys-510 contribute to the active site.

This sequence belongs to the GPI family.

The protein resides in the cytoplasm. The catalysed reaction is alpha-D-glucose 6-phosphate = beta-D-fructose 6-phosphate. Its pathway is carbohydrate biosynthesis; gluconeogenesis. It functions in the pathway carbohydrate degradation; glycolysis; D-glyceraldehyde 3-phosphate and glycerone phosphate from D-glucose: step 2/4. In terms of biological role, catalyzes the reversible isomerization of glucose-6-phosphate to fructose-6-phosphate. The sequence is that of Glucose-6-phosphate isomerase from Shewanella frigidimarina (strain NCIMB 400).